The following is a 135-amino-acid chain: Small ribosomal subunit protein uS12 (135 aa).

Position 89 is a 3-methylthioaspartic acid (aspartate 89). The tract at residues asparagine 108–lysine 135 is disordered. Basic residues predominate over residues threonine 111–alanine 122. Residues lysine 123–lysine 135 are compositionally biased toward basic and acidic residues.

It belongs to the universal ribosomal protein uS12 family. As to quaternary structure, part of the 30S ribosomal subunit. Contacts proteins S8 and S17. May interact with IF1 in the 30S initiation complex.

Its function is as follows. With S4 and S5 plays an important role in translational accuracy. In terms of biological role, interacts with and stabilizes bases of the 16S rRNA that are involved in tRNA selection in the A site and with the mRNA backbone. Located at the interface of the 30S and 50S subunits, it traverses the body of the 30S subunit contacting proteins on the other side and probably holding the rRNA structure together. The combined cluster of proteins S8, S12 and S17 appears to hold together the shoulder and platform of the 30S subunit. The sequence is that of Small ribosomal subunit protein uS12 from Helicobacter pylori (strain P12).